The primary structure comprises 367 residues: 3-dehydroquinate synthase (367 aa).

NAD(+) contacts are provided by residues 69–74 (DGEAFK), 103–107 (GVIGD), 127–128 (TT), Lys140, and Lys149. Glu182, His245, and His262 together coordinate Zn(2+).

Belongs to the sugar phosphate cyclases superfamily. Dehydroquinate synthase family. Requires Co(2+) as cofactor. Zn(2+) serves as cofactor. It depends on NAD(+) as a cofactor.

The protein localises to the cytoplasm. The enzyme catalyses 7-phospho-2-dehydro-3-deoxy-D-arabino-heptonate = 3-dehydroquinate + phosphate. It participates in metabolic intermediate biosynthesis; chorismate biosynthesis; chorismate from D-erythrose 4-phosphate and phosphoenolpyruvate: step 2/7. In terms of biological role, catalyzes the conversion of 3-deoxy-D-arabino-heptulosonate 7-phosphate (DAHP) to dehydroquinate (DHQ). This chain is 3-dehydroquinate synthase, found in Pseudomonas savastanoi pv. phaseolicola (strain 1448A / Race 6) (Pseudomonas syringae pv. phaseolicola (strain 1448A / Race 6)).